The sequence spans 689 residues: Glycine--tRNA ligase beta subunit (689 aa).

It belongs to the class-II aminoacyl-tRNA synthetase family. Tetramer of two alpha and two beta subunits.

The protein resides in the cytoplasm. The catalysed reaction is tRNA(Gly) + glycine + ATP = glycyl-tRNA(Gly) + AMP + diphosphate. This Pectobacterium carotovorum subsp. carotovorum (strain PC1) protein is Glycine--tRNA ligase beta subunit.